Reading from the N-terminus, the 370-residue chain is GDSL esterase/lipase At1g09390 (370 aa).

An N-terminal signal peptide occupies residues 1–27; that stretch reads MATLSLHSHSFLLVLLPFILILRQNLA. Serine 44 serves as the catalytic Nucleophile. N-linked (GlcNAc...) asparagine glycosylation is found at asparagine 90 and asparagine 315. Residues aspartate 336 and histidine 339 contribute to the active site.

Belongs to the 'GDSL' lipolytic enzyme family.

The protein resides in the secreted. This is GDSL esterase/lipase At1g09390 from Arabidopsis thaliana (Mouse-ear cress).